The following is a 99-amino-acid chain: UPF0045 protein MTH_1187 (99 aa).

Belongs to the UPF0045 family. As to quaternary structure, homotetramer.

The chain is UPF0045 protein MTH_1187 from Methanothermobacter thermautotrophicus (strain ATCC 29096 / DSM 1053 / JCM 10044 / NBRC 100330 / Delta H) (Methanobacterium thermoautotrophicum).